A 290-amino-acid polypeptide reads, in one-letter code: Porphobilinogen deaminase (290 aa).

C237 bears the S-(dipyrrolylmethanemethyl)cysteine mark.

Belongs to the HMBS family. As to quaternary structure, monomer. Dipyrromethane serves as cofactor.

It carries out the reaction 4 porphobilinogen + H2O = hydroxymethylbilane + 4 NH4(+). It participates in porphyrin-containing compound metabolism; protoporphyrin-IX biosynthesis; coproporphyrinogen-III from 5-aminolevulinate: step 2/4. Tetrapolymerization of the monopyrrole PBG into the hydroxymethylbilane pre-uroporphyrinogen in several discrete steps. This is Porphobilinogen deaminase from Clostridium botulinum (strain Langeland / NCTC 10281 / Type F).